We begin with the raw amino-acid sequence, 430 residues long: Sorting nexin-30 (430 aa).

A compositionally biased stretch (polar residues) spans 1–18 (MSNGGTPRSLPSSGQKSI). The tract at residues 1–66 (MSNGGTPRSL…SSPASSSSLL (66 aa)) is disordered. Over residues 57–66 (SSPASSSSLL) the composition is skewed to low complexity. Positions 80 to 201 (RDLFVTVDDP…AFLSAKDLNK (122 aa)) constitute a PX domain. 4 residues coordinate a 1,2-diacyl-sn-glycero-3-phospho-(1D-myo-inositol-3-phosphate): R123, Q125, K153, and R167. The 206-residue stretch at 223–428 (KLRGRPVEFA…LQDKQDAKGE (206 aa)) folds into the BAR domain.

Belongs to the sorting nexin family.

The protein localises to the early endosome membrane. Functionally, involved in the regulation of endocytosis and in several stages of intracellular trafficking. Together with snx4, involved in autophagosome assembly. The polypeptide is Sorting nexin-30 (snx30) (Danio rerio (Zebrafish)).